A 138-amino-acid polypeptide reads, in one-letter code: ATP synthase epsilon chain (138 aa).

This sequence belongs to the ATPase epsilon chain family. In terms of assembly, F-type ATPases have 2 components, CF(1) - the catalytic core - and CF(0) - the membrane proton channel. CF(1) has five subunits: alpha(3), beta(3), gamma(1), delta(1), epsilon(1). CF(0) has three main subunits: a, b and c.

The protein localises to the cell membrane. Functionally, produces ATP from ADP in the presence of a proton gradient across the membrane. The protein is ATP synthase epsilon chain of Polynucleobacter asymbioticus (strain DSM 18221 / CIP 109841 / QLW-P1DMWA-1) (Polynucleobacter necessarius subsp. asymbioticus).